Reading from the N-terminus, the 324-residue chain is Glyoxylate/hydroxypyruvate reductase B (324 aa).

Active-site residues include arginine 237 and glutamate 266. Histidine 285 (proton donor) is an active-site residue.

The protein belongs to the D-isomer specific 2-hydroxyacid dehydrogenase family. GhrB subfamily. Homodimer.

The protein localises to the cytoplasm. The enzyme catalyses glycolate + NADP(+) = glyoxylate + NADPH + H(+). It catalyses the reaction (R)-glycerate + NAD(+) = 3-hydroxypyruvate + NADH + H(+). It carries out the reaction (R)-glycerate + NADP(+) = 3-hydroxypyruvate + NADPH + H(+). Functionally, catalyzes the NADPH-dependent reduction of glyoxylate and hydroxypyruvate into glycolate and glycerate, respectively. The sequence is that of Glyoxylate/hydroxypyruvate reductase B from Escherichia coli (strain SMS-3-5 / SECEC).